A 635-amino-acid polypeptide reads, in one-letter code: Threonine--tRNA ligase (635 aa).

The TGS domain occupies 1-62 (MITITLPDGS…EHDAILRIIT (62 aa)). Residues 244–535 (DHRKIGKAQD…LIEHYAGIWP (292 aa)) are catalytic. C335, H386, and H512 together coordinate Zn(2+).

It belongs to the class-II aminoacyl-tRNA synthetase family. In terms of assembly, homodimer. Requires Zn(2+) as cofactor.

It is found in the cytoplasm. It carries out the reaction tRNA(Thr) + L-threonine + ATP = L-threonyl-tRNA(Thr) + AMP + diphosphate + H(+). Functionally, catalyzes the attachment of threonine to tRNA(Thr) in a two-step reaction: L-threonine is first activated by ATP to form Thr-AMP and then transferred to the acceptor end of tRNA(Thr). Also edits incorrectly charged L-seryl-tRNA(Thr). In Xylella fastidiosa (strain M12), this protein is Threonine--tRNA ligase.